A 305-amino-acid chain; its full sequence is Suppressor of activated egl-4 protein 2 (305 aa).

Residues 138-168 (KRGYESDSSDVSGVSHCSDAKRRRGRPRKDE) form a disordered region. A DNA-binding region (a.T hook) is located at residues 158 to 170 (KRRRGRPRKDEEA).

As to quaternary structure, interacts with phosphorylated egl-4. May interact with itself. May be a component of a histone deacetylase complex containing saeg-2, saeg-1 and hda-2. Ubiquitously expressed.

The protein localises to the nucleus. In terms of biological role, as a likely component of a histone deacetylase complex, together with saeg-1 and hda-2, functions downstream of the cAMP-dependent kinase egl-4 to regulate the expression of genes required for egg-laying and foraging. In Caenorhabditis elegans, this protein is Suppressor of activated egl-4 protein 2.